The primary structure comprises 225 residues: Ribosomal RNA small subunit methyltransferase G (225 aa).

Residues G71, L76, 121-122, and R139 contribute to the S-adenosyl-L-methionine site; that span reads AE. The disordered stretch occupies residues 204 to 225; that stretch reads VVEARRATPSNGRGRPGRSSRR.

It belongs to the methyltransferase superfamily. RNA methyltransferase RsmG family.

Its subcellular location is the cytoplasm. Functionally, specifically methylates the N7 position of guanine in position 518 of 16S rRNA. The sequence is that of Ribosomal RNA small subunit methyltransferase G from Mycobacterium sp. (strain KMS).